We begin with the raw amino-acid sequence, 96 residues long: Co-chaperonin GroES (96 aa).

It belongs to the GroES chaperonin family. As to quaternary structure, heptamer of 7 subunits arranged in a ring. Interacts with the chaperonin GroEL.

The protein localises to the cytoplasm. Its function is as follows. Together with the chaperonin GroEL, plays an essential role in assisting protein folding. The GroEL-GroES system forms a nano-cage that allows encapsulation of the non-native substrate proteins and provides a physical environment optimized to promote and accelerate protein folding. GroES binds to the apical surface of the GroEL ring, thereby capping the opening of the GroEL channel. This Neisseria meningitidis serogroup B (strain ATCC BAA-335 / MC58) protein is Co-chaperonin GroES.